A 476-amino-acid polypeptide reads, in one-letter code: Xylan O-acetyltransferase 4 (476 aa).

Positions 1 to 37 (MTKPQQQSPPSTTATTTTSPPPPPPSTPPPASSSSSS) are disordered. Residues 1 to 63 (MTKPQQQSPP…SLLSALRRSP (63 aa)) are Cytoplasmic-facing. Over residues 8–18 (SPPSTTATTTT) the composition is skewed to low complexity. Pro residues predominate over residues 19-31 (SPPPPPPSTPPPA). The chain crosses the membrane as a helical; Signal-anchor for type II membrane protein span at residues 64 to 80 (VTTLVAAFFLLALFMYG). Over 81–476 (EDVRTLAELS…PSPHPPLPPQ (396 aa)) the chain is Lumenal. N-linked (GlcNAc...) asparagine glycosylation is found at Asn-103, Asn-128, and Asn-167. Disulfide bonds link Cys-117/Cys-168, Cys-139/Cys-204, Cys-148/Cys-444, and Cys-360/Cys-440. A GDS motif motif is present at residues 191 to 193 (GDS). Ser-193 (nucleophile) is an active-site residue. Asn-299 and Asn-369 each carry an N-linked (GlcNAc...) asparagine glycan. Asp-439 functions as the Proton donor in the catalytic mechanism. Residues 439–442 (DCIH) carry the DXXH motif motif. Residue His-442 is the Proton acceptor of the active site.

This sequence belongs to the PC-esterase family. TBL subfamily. In terms of tissue distribution, highly expressed in leaves. Expressed in roots, stems and inflorescences.

It is found in the golgi apparatus membrane. Functionally, xylan acetyltransferase required for 2-O- and 3-O-monoacetylation of xylosyl residues in xylan. Catalyzes the 2-O-acetylation of xylan, followed by nonenzymatic acetyl migration to the O-3 position, resulting in products that are monoacetylated at both O-2 and O-3 positions. This Oryza sativa subsp. japonica (Rice) protein is Xylan O-acetyltransferase 4.